The sequence spans 1400 residues: MAPLSRKWLPVVGAVALALTFAQSPGQVSPDTKLDLTANPLRFLARATNLWNSDLPFGQAQNQAYGYLFPHGTFFVIGHLLGVPGWVTQRLWWAVLLTVGFWGLLRVAEALGVGGPSSRVVGAVAFALSPRVLTTLGSISSETLPMMLAPWVLLPTILALRGTSGRSVRALAAQAGLAVALMGAVNAIATLAGCLPAVIWWACHRPNRLWWRYTAWWLLAMALATLWWVMALTQLHGVSPPFLDFIESSGVTTQWSSLVEVLRGTDSWTPFVAPNATAGAPLVTGSAAILGTCLVAAAGLAGLTSPAMPARGRLVTMLLVGVVLLAVGHRGGLASPVAHPVQAFLDAAGTPLRNVHKVGPVIRLPLVLGLAQLLSRVPLPGSAPRPAWLRAFAHPERDKRVAVAVVALTALMVSTSLAWTGRVAPPGTFGALPQYWQEAADWLRTHHAATPTPGRVLVVPGAPFATQVWGTSHDEPLQVLGDGPWGVRDSIPLTPPQTIRALDSVQRLFAAGRPSAGLADTLARQGISYVLVRNDLDPETSRSARPILLHRSIAGSPGLAKLAEFGAPVGPDPLAGFVNDSGLRPRYPAIEIYRVSAPANPGAPYFAATDQLARVDGGPEVLLRLDERRRLQGQPPLGPVLMTADARAAGLPVPQVAVTDTPVARETDYGRVDHHSSAIRAPGDARHTYNRVPDYPVPGAEPVVGGWTGGRITVSSSSADATAMPDVAPASAPAAAVDGDPATAWVSNALQAAVGQWLQVDFDRPVTNAVVTLTPSATAVGAQVRRILIETVNGSTTLRFDEAGKPLTAALPYGETPWVRFTAAATDDGSAGVQFGITDLAITQYDASGFAHPVQLRHTVLVPGPPPGSAIAGWDLGSELLGRPGCAPGPDGVRCAASMALAPEEPANLSRTLTVPRPVSVTPMVWVRPRQGPKLADLIAAPSTTRASGDSDLVDILGSAYAAADGDPATAWTAPQRVVQHKTPPTLTLTLPRPTVVTGLRLAASRSMLPAHPTVVAINLGDGPQVRQLQVGELTTLWLHPRVTDTVSVSLLDWDDVIDRNALGFDQLKPPGLAEVVVLSAGGAPIAPADAARNRARALTVDCDHGPVVAVAGRFVHTSIRTTVGALLDGEPVAALPCEREPIALPAGQQELLISPGAAFVVDGAQLSTPGAGLSSATVTSAETGAWGPTHREVRVPESATSRVLVVPESINSGWVARTSTGARLTPIAVNGWQQAWVVPAGNPGTITLTFAPNSLYRASLAIGLALLPLLALLAFWRTGRRQLADRPTPPWRPGAWAAAGVLAAGAVIASIAGVMVMGTALGVRYALRRRERLRDRVTVGLAAGGLILAGAALSRHPWRSVDGYAGNWASVQLLALISVSVVAASVVATSESRGQDRMQ.

A signal peptide spans Met-1–Pro-30. The next 8 helical transmembrane spans lie at Tyr-67–Val-87, Leu-91–Leu-111, Ile-139–Ala-159, Val-179–Ile-199, Ala-215–Leu-235, Leu-282–Gly-302, Leu-314–Ala-334, and Val-401–Gly-421. Positions Ala-700–Arg-883 constitute an F5/8 type C domain. The next 4 helical transmembrane spans lie at Leu-1256–Phe-1276, Trp-1297–Val-1317, Val-1338–Pro-1358, and Trp-1369–Ala-1389.

The protein resides in the membrane. It carries out the reaction Adds an alpha-D-arabinofuranosyl group from trans,octacis-decaprenylphospho-beta-D-arabinofuranose at the 3-O-position of an alpha-(1-&gt;5)-arabinofuranan chain attached to a beta-(1-&gt;5)-galactofuranan chain.. Its pathway is cell wall biogenesis; cell wall polysaccharide biosynthesis. In terms of biological role, involved in the biosynthesis of the arabinogalactan (AG) region of the mycolylarabinogalactan-peptidoglycan (mAGP) complex, an essential component of the mycobacterial cell wall. Catalyzes the addition of an arabinofuranosyl (Araf) residue from the sugar donor decaprenyl-phospho-arabinose (DPA) on the C-3 of an alpha-(1-&gt;5)-linked Araf from the arabinan backbone of AG. In Mycobacterium tuberculosis (strain ATCC 25618 / H37Rv), this protein is Alpha-(1-&gt;3)-arabinofuranosyltransferase (aftD).